Here is a 291-residue protein sequence, read N- to C-terminus: N-acetylmannosamine kinase (291 aa).

Residues 5-12 (AIDIGGTK) and 132-139 (GVGGGVVS) each bind ATP. Histidine 156, cysteine 166, cysteine 168, and cysteine 173 together coordinate Zn(2+).

Belongs to the ROK (NagC/XylR) family. NanK subfamily. Homodimer.

The catalysed reaction is an N-acyl-D-mannosamine + ATP = an N-acyl-D-mannosamine 6-phosphate + ADP + H(+). Its pathway is amino-sugar metabolism; N-acetylneuraminate degradation; D-fructose 6-phosphate from N-acetylneuraminate: step 2/5. Catalyzes the phosphorylation of N-acetylmannosamine (ManNAc) to ManNAc-6-P. The protein is N-acetylmannosamine kinase of Escherichia fergusonii (strain ATCC 35469 / DSM 13698 / CCUG 18766 / IAM 14443 / JCM 21226 / LMG 7866 / NBRC 102419 / NCTC 12128 / CDC 0568-73).